Here is a 437-residue protein sequence, read N- to C-terminus: GTPase Der (437 aa).

2 EngA-type G domains span residues 4–167 (PIVA…PDNA) and 175–352 (IHFS…QHHR). GTP contacts are provided by residues 10–17 (GRPNVGKS), 57–61 (DTGGI), 119–122 (NKVD), 181–188 (GRPNVGKS), 229–233 (DTAGI), and 294–297 (NKWD). The KH-like domain maps to 353–437 (QRIQSAVLND…PIHLIKRQRQ (85 aa)).

Belongs to the TRAFAC class TrmE-Era-EngA-EngB-Septin-like GTPase superfamily. EngA (Der) GTPase family. Associates with the 50S ribosomal subunit.

GTPase that plays an essential role in the late steps of ribosome biogenesis. This is GTPase Der from Limosilactobacillus reuteri (strain DSM 20016) (Lactobacillus reuteri).